A 204-amino-acid chain; its full sequence is Glycerol-3-phosphate acyltransferase (204 aa).

The next 5 membrane-spanning stretches (helical) occupy residues 8–28, 53–73, 81–101, 116–136, and 155–175; these read ILIF…CYIF, VPAA…VVIA, FITA…IFFG, FGFS…VAII, and VIFT…IIIL.

It belongs to the PlsY family. In terms of assembly, probably interacts with PlsX.

The protein localises to the cell inner membrane. The enzyme catalyses an acyl phosphate + sn-glycerol 3-phosphate = a 1-acyl-sn-glycero-3-phosphate + phosphate. The protein operates within lipid metabolism; phospholipid metabolism. Catalyzes the transfer of an acyl group from acyl-phosphate (acyl-PO(4)) to glycerol-3-phosphate (G3P) to form lysophosphatidic acid (LPA). This enzyme utilizes acyl-phosphate as fatty acyl donor, but not acyl-CoA or acyl-ACP. This chain is Glycerol-3-phosphate acyltransferase, found in Francisella tularensis subsp. holarctica (strain FTNF002-00 / FTA).